The sequence spans 279 residues: MNYNDKSLSALKLGQKTEYKSEYDPTLLQPVPRKLNRDGLGITEQQPFDRGADVWTCYELSWLNENGLPQVAIADVAIDFRSENLIESKSFKLYLNSFNQTKFASLEQVEQTLAKDLSQCASGQVSVKVYKLSAYTQQPIVDFAGECIDEQDIQIDSYEFSNEHLASVAEGEVVEETLVSHLLKSNCLITSQPDWGSVQIHYVGKKLNREKLLRYLVSFREHNEFHEQCVERIFTDLIQFTQPEKLTVYARYTRRGGLDINPFRSNFESVPQNLRMARQ.

86–88 serves as a coordination point for substrate; that stretch reads IES. NADPH is bound at residue 88-89; that stretch reads SK. Catalysis depends on Cys-187, which acts as the Thioimide intermediate. Catalysis depends on Asp-194, which acts as the Proton donor. 226–227 provides a ligand contact to substrate; sequence HE. 255–256 contributes to the NADPH binding site; it reads RG.

The protein belongs to the GTP cyclohydrolase I family. QueF type 2 subfamily. In terms of assembly, homodimer.

It is found in the cytoplasm. It carries out the reaction 7-aminomethyl-7-carbaguanine + 2 NADP(+) = 7-cyano-7-deazaguanine + 2 NADPH + 3 H(+). The protein operates within tRNA modification; tRNA-queuosine biosynthesis. Its function is as follows. Catalyzes the NADPH-dependent reduction of 7-cyano-7-deazaguanine (preQ0) to 7-aminomethyl-7-deazaguanine (preQ1). The polypeptide is NADPH-dependent 7-cyano-7-deazaguanine reductase (Actinobacillus pleuropneumoniae serotype 7 (strain AP76)).